A 478-amino-acid chain; its full sequence is MLO-like protein 13 (478 aa).

Topologically, residues 1-10 (MAEARSGSLE) are extracellular. A helical transmembrane segment spans residues 11 to 31 (YTPTWVVAFICFIIVLLSLLA). At 32–60 (ERGLHHLGKCLKRRQQDALFEALQKLKEE) the chain is on the cytoplasmic side. A helical membrane pass occupies residues 61–81 (LMLLGFISLMLTVSQAAIRHI). The Extracellular segment spans residues 82 to 145 (CVPPALVNNM…VSVEALHQLH (64 aa)). The helical transmembrane segment at 146–166 (IFIFVLAVFHVIFCASTMVLG) threads the bilayer. Topologically, residues 167-276 (GARIQQWKHW…LRTLEIDFKK (110 aa)) are cytoplasmic. 2 consecutive transmembrane segments (helical) span residues 277 to 297 (VVSI…LNVG) and 298 to 318 (GWNT…MVGA). The Cytoplasmic segment spans residues 319–360 (KLEYIISSLALDVSEKRSRAEEAVITPSDELFWFHRPGIVLQ). A helical transmembrane segment spans residues 361-381 (LIHFILFQNSFEIAFFFWILF). At 382-400 (TYGIHSCIMEKLGYLIPRL) the chain is on the extracellular side. Residues 401-421 (VMGVLVQVLCSYSTLPLYALV) traverse the membrane as a helical segment. At 422–478 (TQMGSKFKKGIFDNVVQSTLEGWLEDTRNRGESTSEAHRIEMQPTTPESYNVQSENP) the chain is on the cytoplasmic side. The tract at residues 435–456 (NVVQSTLEGWLEDTRNRGESTS) is calmodulin-binding. Residues 449–462 (RNRGESTSEAHRIE) are compositionally biased toward basic and acidic residues. The interval 449–478 (RNRGESTSEAHRIEMQPTTPESYNVQSENP) is disordered. Over residues 464–478 (QPTTPESYNVQSENP) the composition is skewed to polar residues.

This sequence belongs to the MLO family.

It is found in the membrane. In terms of biological role, may be involved in modulation of pathogen defense and leaf cell death. Activity seems to be regulated by Ca(2+)-dependent calmodulin binding and seems not to require heterotrimeric G proteins. This chain is MLO-like protein 13 (MLO13), found in Arabidopsis thaliana (Mouse-ear cress).